Consider the following 151-residue polypeptide: Large ribosomal subunit protein bL9 (151 aa).

Belongs to the bacterial ribosomal protein bL9 family.

In terms of biological role, binds to the 23S rRNA. In Chlorobium phaeobacteroides (strain DSM 266 / SMG 266 / 2430), this protein is Large ribosomal subunit protein bL9.